The sequence spans 949 residues: ATPase 6, plasma membrane-type (949 aa).

At 1–64 (MAADISWDEI…EKVENKFLKF (64 aa)) the chain is on the cytoplasmic side. A helical membrane pass occupies residues 65–84 (LGFMWNPLSWVMEAAAIMAI). Over 85–96 (VLANGGGRPPDW) the chain is Extracellular. The chain crosses the membrane as a helical span at residues 97-117 (QDFVGITCLLIINSTISFIEE). Over 118–246 (NNAGNAAAAL…GHFQKVLTAI (129 aa)) the chain is Cytoplasmic. Residues 247 to 267 (GNFCICSIGIGMLIEIIIMYP) traverse the membrane as a helical segment. The Extracellular portion of the chain corresponds to 268 to 276 (IQHRKYRDG). A helical membrane pass occupies residues 277 to 294 (IDNLLVLLIGGIPIAMPT). The Cytoplasmic portion of the chain corresponds to 295–645 (VLSVTMAIGS…TSRAIFQRMK (351 aa)). Asp332 functions as the 4-aspartylphosphate intermediate in the catalytic mechanism. Asp590 and Asp594 together coordinate Mg(2+). A helical membrane pass occupies residues 646 to 667 (NYTIYAVSITIRIVLGFMLVAL). Topologically, residues 668–672 (IWEFD) are extracellular. A helical transmembrane segment spans residues 673 to 695 (FSPFMVLIIAILNDGTIMTISKD). Over 696-711 (RVKPSPIPDSWKLKEI) the chain is Cytoplasmic. The helical transmembrane segment at 712-732 (FATGVVLGTYMALVTVVFFWL) threads the bilayer. Topologically, residues 733–753 (AHDTTFFSDKFGVRSLQGKDE) are extracellular. The helical transmembrane segment at 754–774 (ELIAVLYLQVSIISQALIFVT) threads the bilayer. The Cytoplasmic portion of the chain corresponds to 775-786 (RSRSWSFVERPG). The helical transmembrane segment at 787–807 (LLLLIAFFVAQLIATLIATYA) threads the bilayer. The Extracellular segment spans residues 808-815 (HWEFARIK). A helical transmembrane segment spans residues 816–836 (GCGWGWCGVIWIYSIVTYIPL). Over 837–949 (DILKFITRYT…IDNLNQHYTV (113 aa)) the chain is Cytoplasmic. Phosphothreonine is present on Thr883. A Phosphoserine modification is found at Ser931. The interval 947-949 (YTV) is interaction with 14-3-3 proteins. A Phosphothreonine modification is found at Thr948.

This sequence belongs to the cation transport ATPase (P-type) (TC 3.A.3) family. Type IIIA subfamily. In terms of assembly, binds to 14-3-3 proteins. The binding is induced by phosphorylation of Thr-948. Binding to 14-3-3 proteins activates the H(+)-ATPase. As to expression, expressed in guard cells.

The protein resides in the membrane. The enzyme catalyses ATP + H2O + H(+)(in) = ADP + phosphate + 2 H(+)(out). The plasma membrane H(+) ATPase of plants and fungi generates a proton gradient that drives the active transport of nutrients by H(+)-symport. The resulting external acidification and/or internal alkinization may mediate growth responses. The polypeptide is ATPase 6, plasma membrane-type (AHA6) (Arabidopsis thaliana (Mouse-ear cress)).